The chain runs to 138 residues: Large ribosomal subunit protein bL17 (138 aa).

The interval 118-138 is disordered; the sequence is RDEDAKGKDSGPSQDGAAEAA.

It belongs to the bacterial ribosomal protein bL17 family. Part of the 50S ribosomal subunit. Contacts protein L32.

This Rhodopseudomonas palustris (strain HaA2) protein is Large ribosomal subunit protein bL17.